Consider the following 329-residue polypeptide: DNA-directed RNA polymerase subunit alpha (329 aa).

Residues 1-235 (MQGSVTEFLK…EQLDAFVDLR (235 aa)) form an alpha N-terminal domain (alpha-NTD) region. Positions 249-329 (FDPILLRPVD…NWPPASIAED (81 aa)) are alpha C-terminal domain (alpha-CTD).

The protein belongs to the RNA polymerase alpha chain family. Homodimer. The RNAP catalytic core consists of 2 alpha, 1 beta, 1 beta' and 1 omega subunit. When a sigma factor is associated with the core the holoenzyme is formed, which can initiate transcription.

The enzyme catalyses RNA(n) + a ribonucleoside 5'-triphosphate = RNA(n+1) + diphosphate. DNA-dependent RNA polymerase catalyzes the transcription of DNA into RNA using the four ribonucleoside triphosphates as substrates. This Mannheimia succiniciproducens (strain KCTC 0769BP / MBEL55E) protein is DNA-directed RNA polymerase subunit alpha.